Reading from the N-terminus, the 249-residue chain is MLKRLKGLLVLALGFTGLQVFGQQNPDIKIEKLKDNLYVYTTYNTFKGTKYAANAVYMVTDKGVVVIDSPWGEDKFKSFTDEIYKKHGKKVIMNIATHSHDDRAGGLEYFGKLGAKTYSTKMTDSILAKENKPRAKYTFDNNKSFKVGNTEFQVYYPGKGHTADNVVVWFPKDKVLVGGCIVKSGDSKDLGYIGEAYVNDWTQSIHNIQQKFPDVQYVVAGHDDWKDQTSIQHTLDLISDYQQKQKASN.

The N-terminal stretch at 1–22 (MLKRLKGLLVLALGFTGLQVFG) is a signal peptide. The Zn(2+) site is built by H98, H100, D102, H161, and C180. Residue K183 coordinates substrate. Zn(2+) is bound at residue H222.

Belongs to the metallo-beta-lactamase superfamily. Class-B beta-lactamase family. In terms of assembly, monomer. It depends on Zn(2+) as a cofactor.

Its subcellular location is the periplasm. It catalyses the reaction a beta-lactam + H2O = a substituted beta-amino acid. In terms of biological role, confers resistance to the different beta-lactams antibiotics (penicillin, cephalosporin and carbapenem) via the hydrolysis of the beta-lactam ring. This chain is Metallo-beta-lactamase type 2 (blaB5), found in Elizabethkingia meningoseptica (Chryseobacterium meningosepticum).